Consider the following 315-residue polypeptide: Porphobilinogen deaminase (315 aa).

Cysteine 241 bears the S-(dipyrrolylmethanemethyl)cysteine mark.

This sequence belongs to the HMBS family. As to quaternary structure, monomer. The cofactor is dipyrromethane.

The enzyme catalyses 4 porphobilinogen + H2O = hydroxymethylbilane + 4 NH4(+). Its pathway is porphyrin-containing compound metabolism; protoporphyrin-IX biosynthesis; coproporphyrinogen-III from 5-aminolevulinate: step 2/4. Tetrapolymerization of the monopyrrole PBG into the hydroxymethylbilane pre-uroporphyrinogen in several discrete steps. This Nitratidesulfovibrio vulgaris (strain ATCC 29579 / DSM 644 / CCUG 34227 / NCIMB 8303 / VKM B-1760 / Hildenborough) (Desulfovibrio vulgaris) protein is Porphobilinogen deaminase.